The chain runs to 305 residues: MPKVGIIFNDDKPTACSVAQELQEQLQQSGFTVAMETGSGGLLGYSQPDRPICHTRIEHLTPPHFDESMPFAIVLGGDGTVLSAFRQLAPLGIPLLTINTGHMGFLTEIYLNQLPTAIEQLINGDYQIESRSMMTVRLMREENLLWEALSLNEMVLHREPLTSMCHFEIQVGYHASVDIAADGIIVSTPTGSTAYSLSAGGPVVTPDVPVFQLAPICPHSLASRALVFSDLEPVTIFPATPNRMVLVVDGNGGCYVLPEDRVHLSKSPYPAKFIRLQTPEFFRILREKLGWGLPHIAKPTSVELP.

D78 acts as the Proton acceptor in catalysis. NAD(+) contacts are provided by residues 78–79 (DG), 152–153 (NE), D182, 193–198 (TAYSLS), and N251.

It belongs to the NAD kinase family. It depends on a divalent metal cation as a cofactor.

The protein resides in the cytoplasm. It carries out the reaction NAD(+) + ATP = ADP + NADP(+) + H(+). Involved in the regulation of the intracellular balance of NAD and NADP, and is a key enzyme in the biosynthesis of NADP. Catalyzes specifically the phosphorylation on 2'-hydroxyl of the adenosine moiety of NAD to yield NADP. Functions as a growth repressor under light-activated heterotrophic growth conditions and light and dark cycle conditions in the presence of glucose. NADP(H)/NAD(H) maintenance by slr0400 probably plays a significant role in modulating glycolysis and the TCA cycle to repress the growth rate and maintain the photosynthetic capacity. In Synechocystis sp. (strain ATCC 27184 / PCC 6803 / Kazusa), this protein is NAD kinase 2.